A 548-amino-acid chain; its full sequence is Dihydroxy-acid dehydratase (548 aa).

Asp78 contributes to the Mg(2+) binding site. [2Fe-2S] cluster is bound at residue Cys119. 2 residues coordinate Mg(2+): Asp120 and Lys121. Position 121 is an N6-carboxylysine (Lys121). Cys185 serves as a coordination point for [2Fe-2S] cluster. Residue Glu438 coordinates Mg(2+). Ser464 serves as the catalytic Proton acceptor.

Belongs to the IlvD/Edd family. Homodimer. [2Fe-2S] cluster is required as a cofactor. It depends on Mg(2+) as a cofactor.

It carries out the reaction (2R)-2,3-dihydroxy-3-methylbutanoate = 3-methyl-2-oxobutanoate + H2O. The catalysed reaction is (2R,3R)-2,3-dihydroxy-3-methylpentanoate = (S)-3-methyl-2-oxopentanoate + H2O. The protein operates within amino-acid biosynthesis; L-isoleucine biosynthesis; L-isoleucine from 2-oxobutanoate: step 3/4. It participates in amino-acid biosynthesis; L-valine biosynthesis; L-valine from pyruvate: step 3/4. Functions in the biosynthesis of branched-chain amino acids. Catalyzes the dehydration of (2R,3R)-2,3-dihydroxy-3-methylpentanoate (2,3-dihydroxy-3-methylvalerate) into 2-oxo-3-methylpentanoate (2-oxo-3-methylvalerate) and of (2R)-2,3-dihydroxy-3-methylbutanoate (2,3-dihydroxyisovalerate) into 2-oxo-3-methylbutanoate (2-oxoisovalerate), the penultimate precursor to L-isoleucine and L-valine, respectively. The sequence is that of Dihydroxy-acid dehydratase from Methanothrix thermoacetophila (strain DSM 6194 / JCM 14653 / NBRC 101360 / PT) (Methanosaeta thermophila).